Here is a 430-residue protein sequence, read N- to C-terminus: Tol-Pal system protein TolB (430 aa).

The N-terminal stretch at 1-21 (MKQALRVAFGFLMLWAAMLHA) is a signal peptide.

Belongs to the TolB family. As to quaternary structure, the Tol-Pal system is composed of five core proteins: the inner membrane proteins TolA, TolQ and TolR, the periplasmic protein TolB and the outer membrane protein Pal. They form a network linking the inner and outer membranes and the peptidoglycan layer.

The protein resides in the periplasm. Its function is as follows. Part of the Tol-Pal system, which plays a role in outer membrane invagination during cell division and is important for maintaining outer membrane integrity. TolB occupies a key intermediary position in the Tol-Pal system because it communicates directly with both membrane-embedded components, Pal in the outer membrane and TolA in the inner membrane. This is Tol-Pal system protein TolB from Escherichia fergusonii (strain ATCC 35469 / DSM 13698 / CCUG 18766 / IAM 14443 / JCM 21226 / LMG 7866 / NBRC 102419 / NCTC 12128 / CDC 0568-73).